Consider the following 443-residue polypeptide: 26S proteasome regulatory subunit 4 homolog B (443 aa).

Disordered stretches follow at residues Met1–Val55 and Arg87–Thr108. Composition is skewed to basic and acidic residues over residues Gln12–Glu28 and Arg87–Arg106. Gly229–Thr236 serves as a coordination point for ATP. Residues Lys296 and Lys433 each participate in a glycyl lysine isopeptide (Lys-Gly) (interchain with G-Cter in ubiquitin) cross-link.

This sequence belongs to the AAA ATPase family. Component of the 19S regulatory particle (RP/PA700) base subcomplex of the 26S proteasome. The 26S proteasome is composed of a core protease (CP), known as the 20S proteasome, capped at one or both ends by the 19S regulatory particle (RP/PA700). The RP/PA700 complex is composed of at least 17 different subunits in two subcomplexes, the base and the lid, which form the portions proximal and distal to the 20S proteolytic core, respectively. As to expression, preferentially expressed in the root and shoot apical meristem.

The protein localises to the cytoplasm. It is found in the nucleus. Its function is as follows. The 26S protease is involved in the ATP-dependent degradation of ubiquitinated proteins. The regulatory (or ATPase) complex confers ATP dependency and substrate specificity to the 26S complex. Acts redundantly with RPT2A in the regulation of gametogenesis. With RPT2A plays a critical role in 26S proteasome assembly. In Arabidopsis thaliana (Mouse-ear cress), this protein is 26S proteasome regulatory subunit 4 homolog B.